The following is a 229-amino-acid chain: PKHD-type hydroxylase BBta_1313 (229 aa).

In terms of domain architecture, Fe2OG dioxygenase spans 78–180 (HIFPPLFNRY…RIASFFWLQS (103 aa)). Residues H98, D100, and H161 each contribute to the Fe cation site. Residue R171 coordinates 2-oxoglutarate.

Fe(2+) is required as a cofactor. Requires L-ascorbate as cofactor.

The chain is PKHD-type hydroxylase BBta_1313 from Bradyrhizobium sp. (strain BTAi1 / ATCC BAA-1182).